Reading from the N-terminus, the 240-residue chain is Mitochondrial transcription rescue factor 1 (240 aa).

The transit peptide at Met-1 to Leu-83 directs the protein to the mitochondrion. Residues Ser-92–Gly-127 form a disordered region. The span at Ala-101 to Ser-124 shows a compositional bias: acidic residues. Phosphoserine occurs at positions 106 and 116. Positions Phe-142–Glu-217 constitute an S4 RNA-binding domain.

In terms of assembly, monomer. Interacts with POLRMT. Interacts (via S4 domain) with MTRFR (via C-terminus). Associates with mitoribosomal S39 large subunit, peptidyl tRNA and nascent chain.

It localises to the mitochondrion matrix. In terms of biological role, mitochondrial RNA-binding protein involved in mitochondrial transcription regulation. Functions as a protective factor to maintain proper mitochondrial RNA level during stress. Acts at the transcription level and its protective function depends on its RNA binding ability. Part of a mitoribosome-associated quality control pathway that prevents aberrant translation by responding to interruptions during elongation. As heterodimer with MTRF, ejects the unfinished nascent chain and peptidyl transfer RNA (tRNA), respectively, from stalled ribosomes. Recruitment of mitoribosome biogenesis factors to these quality control intermediates suggests additional roles for MTRES1 and MTRF during mitoribosome rescue. In Mus musculus (Mouse), this protein is Mitochondrial transcription rescue factor 1 (Mtres1).